A 320-amino-acid polypeptide reads, in one-letter code: Transcription factor bHLH96 (320 aa).

The disordered stretch occupies residues 30–121 (EEEDQDPQDT…RSSKNKEEIE (92 aa)). The segment covering 65–76 (YSDDYNYNEEDL) has biased composition (acidic residues). Positions 104–114 (GRRKRRRTRSS) are enriched in basic residues. The region spanning 122 to 173 (NQRMTHIAVERNRRKQMNEYLAVLRSLMPPYYAQRGDQASIVGGAINYLKEL) is the bHLH domain. Positions 184-206 (VKTATEDTGAGHDQTKTTSASSS) are disordered. The 77-residue stretch at 244–320 (SLKILAKKRP…RRIEEESSFS (77 aa)) folds into the ACT domain.

Homodimer. Expressed constitutively in roots, leaves, stems, and flowers.

The protein localises to the nucleus. The sequence is that of Transcription factor bHLH96 (BHLH96) from Arabidopsis thaliana (Mouse-ear cress).